We begin with the raw amino-acid sequence, 291 residues long: ATP synthase gamma chain (291 aa).

This sequence belongs to the ATPase gamma chain family. As to quaternary structure, F-type ATPases have 2 components, CF(1) - the catalytic core - and CF(0) - the membrane proton channel. CF(1) has five subunits: alpha(3), beta(3), gamma(1), delta(1), epsilon(1). CF(0) has three main subunits: a, b and c.

It is found in the cell inner membrane. Its function is as follows. Produces ATP from ADP in the presence of a proton gradient across the membrane. The gamma chain is believed to be important in regulating ATPase activity and the flow of protons through the CF(0) complex. This chain is ATP synthase gamma chain, found in Variovorax paradoxus (strain S110).